The following is a 321-amino-acid chain: Mas-related G-protein coupled receptor member B4 (321 aa).

Over 1-33 the chain is Extracellular; sequence MGTTTLAWNINNTAENGSYTEMFSCITKFNTLN. Asparagine 11 and asparagine 16 each carry an N-linked (GlcNAc...) asparagine glycan. The chain crosses the membrane as a helical span at residues 34-54; the sequence is FLTVIIAVVGLAGNGIVLWLL. The Cytoplasmic portion of the chain corresponds to 55-62; it reads AFHLHRNA. Residues 63-83 form a helical membrane-spanning segment; it reads FSVYVLNLAGADFLYLFTQVV. Residues 84–97 are Extracellular-facing; it reads HSLECVLQLDNNSF. The N-linked (GlcNAc...) asparagine glycan is linked to asparagine 94. The helical transmembrane segment at 98–118 threads the bilayer; the sequence is YILLIVTMFAYLAGLCMIAAI. Residues 119–146 lie on the Cytoplasmic side of the membrane; the sequence is SAERCLSVMWPIWYHCQRPRHTSAIMCA. Residues 147–167 traverse the membrane as a helical segment; it reads LVWVSSLLLSLVVGLGCGFLF. Residues 168–172 are Extracellular-facing; it reads SYYDY. The helical transmembrane segment at 173 to 193 threads the bilayer; that stretch reads YFCITLNFITAAFLIVLSVVL. The Cytoplasmic segment spans residues 194 to 215; it reads SVSSLALLVKIVWGSHRIPVTR. The chain crosses the membrane as a helical span at residues 216 to 236; sequence FFVTIALTVVVFIYFGMPFGI. Residues 237-257 lie on the Extracellular side of the membrane; it reads CWFLLSRIMEFDSIFFNNVYE. A helical transmembrane segment spans residues 258–278; that stretch reads IIEFLSCVNSCANPIIYFLVG. Residues 279–321 lie on the Cytoplasmic side of the membrane; the sequence is SIRQHRLRWQSLKLLLQRAMQDTPEEESGERGPSQRSGELETV. A disordered region spans residues 299–321; it reads QDTPEEESGERGPSQRSGELETV.

Belongs to the G-protein coupled receptor 1 family. Mas subfamily.

The protein resides in the membrane. Functionally, orphan receptor. Probably involved in the function of nociceptive neurons. May regulate nociceptor function and/or development, including the sensation or modulation of pain. This Mus musculus (Mouse) protein is Mas-related G-protein coupled receptor member B4 (Mrgprb4).